Reading from the N-terminus, the 97-residue chain is Aspartyl/glutamyl-tRNA(Asn/Gln) amidotransferase subunit C (97 aa).

The protein belongs to the GatC family. In terms of assembly, heterotrimer of A, B and C subunits.

The enzyme catalyses L-glutamyl-tRNA(Gln) + L-glutamine + ATP + H2O = L-glutaminyl-tRNA(Gln) + L-glutamate + ADP + phosphate + H(+). It carries out the reaction L-aspartyl-tRNA(Asn) + L-glutamine + ATP + H2O = L-asparaginyl-tRNA(Asn) + L-glutamate + ADP + phosphate + 2 H(+). In terms of biological role, allows the formation of correctly charged Asn-tRNA(Asn) or Gln-tRNA(Gln) through the transamidation of misacylated Asp-tRNA(Asn) or Glu-tRNA(Gln) in organisms which lack either or both of asparaginyl-tRNA or glutaminyl-tRNA synthetases. The reaction takes place in the presence of glutamine and ATP through an activated phospho-Asp-tRNA(Asn) or phospho-Glu-tRNA(Gln). In Prochlorococcus marinus (strain AS9601), this protein is Aspartyl/glutamyl-tRNA(Asn/Gln) amidotransferase subunit C.